The sequence spans 340 residues: GTP 3',8-cyclase (340 aa).

In terms of domain architecture, Radical SAM core spans 8 to 227 (KLGRPIRDLR…DMIESHFDIE (220 aa)). Residue Arg17 coordinates GTP. Residues Cys24 and Cys28 each coordinate [4Fe-4S] cluster. Position 30 (Tyr30) interacts with S-adenosyl-L-methionine. Position 31 (Cys31) interacts with [4Fe-4S] cluster. Arg71 is a binding site for GTP. Gly75 contributes to the S-adenosyl-L-methionine binding site. Residue Thr102 coordinates GTP. Ser126 contacts S-adenosyl-L-methionine. Position 163 (Lys163) interacts with GTP. Position 197 (Met197) interacts with S-adenosyl-L-methionine. Residues Cys261 and Cys264 each contribute to the [4Fe-4S] cluster site. 266-268 (RAR) provides a ligand contact to GTP. Cys278 is a [4Fe-4S] cluster binding site.

Belongs to the radical SAM superfamily. MoaA family. In terms of assembly, monomer and homodimer. It depends on [4Fe-4S] cluster as a cofactor.

The catalysed reaction is GTP + AH2 + S-adenosyl-L-methionine = (8S)-3',8-cyclo-7,8-dihydroguanosine 5'-triphosphate + 5'-deoxyadenosine + L-methionine + A + H(+). The protein operates within cofactor biosynthesis; molybdopterin biosynthesis. Its function is as follows. Catalyzes the cyclization of GTP to (8S)-3',8-cyclo-7,8-dihydroguanosine 5'-triphosphate. This Staphylococcus haemolyticus (strain JCSC1435) protein is GTP 3',8-cyclase.